Here is a 444-residue protein sequence, read N- to C-terminus: MGNSFTCISHEQEQRPKKSSGGGGNNSGKYKYVRRLSLMPSFRRRTLLPSLSCSGSSSTSSSKKGGIKAKTKKIRERHHHHHQDHEKDSHIIQEQTLAATNLLFNQTPRNSNSVVPPSFRRSTSVVYPSAQPSGTSSGPVSAVQTPKKSSAGFVRSSSSRQRSSTDPMIKPNQLVDKELNKVEGSETKRFVLVHGGGFGAWCWYKTITLLEKHGFQVDAVELTGSGVSSIDTNNITSLAHYSKPLLHFFESLKPTEKVILVGHDFGGACMSYAMEMFPTKIAKAVFISAAMLANGQSTLDLFNQQLGSNDLMQQAQIFLYANGKKNPPTAVDFDRSLLRDFLFNQSPPKDLALASVSIRPIPFAPVSEKVHVSEKNYGSIRRFYIKTMEDYAVPVLLQEAMIKLNPPEQVFQLKGSDHAPFFSRPQSLNKILVEISQIPFKKSS.

Disordered stretches follow at residues 1–32 (MGNSFTCISHEQEQRPKKSSGGGGNNSGKYKY), 49–90 (PSLS…KDSH), and 124–176 (SVVY…QLVD). A chloroplast-targeting transit peptide spans 1 to 60 (MGNSFTCISHEQEQRPKKSSGGGGNNSGKYKYVRRLSLMPSFRRRTLLPSLSCSGSSSTS). A compositionally biased stretch (low complexity) spans 49–64 (PSLSCSGSSSTSSSKK). A compositionally biased stretch (basic residues) spans 65–82 (GGIKAKTKKIRERHHHHH). The segment covering 124 to 148 (SVVYPSAQPSGTSSGPVSAVQTPKK) has biased composition (polar residues). Residues 149 to 164 (SSAGFVRSSSSRQRSS) show a composition bias toward low complexity. Residues 190–310 (FVLVHGGGFG…LFNQQLGSND (121 aa)) form the AB hydrolase-1 domain. The active-site Acyl-ester intermediate is the Asp-264. Catalysis depends on charge relay system residues Asp-390 and His-418.

It belongs to the AB hydrolase superfamily. Methylesterase family.

It localises to the plastid. Its subcellular location is the chloroplast. Its function is as follows. Putative methylesterase. The sequence is that of Putative methylesterase 13, chloroplastic from Arabidopsis thaliana (Mouse-ear cress).